Here is a 427-residue protein sequence, read N- to C-terminus: UPF0229 protein bll6755 (427 aa).

The interval 86–107 (DYLQRSGQGSAKDSGPGEGDSE) is disordered.

The protein belongs to the UPF0229 family.

This is UPF0229 protein bll6755 from Bradyrhizobium diazoefficiens (strain JCM 10833 / BCRC 13528 / IAM 13628 / NBRC 14792 / USDA 110).